We begin with the raw amino-acid sequence, 120 residues long: Ribosome-binding factor A (120 aa).

It belongs to the RbfA family. As to quaternary structure, monomer. Binds 30S ribosomal subunits, but not 50S ribosomal subunits or 70S ribosomes.

It is found in the cytoplasm. In terms of biological role, one of several proteins that assist in the late maturation steps of the functional core of the 30S ribosomal subunit. Associates with free 30S ribosomal subunits (but not with 30S subunits that are part of 70S ribosomes or polysomes). Required for efficient processing of 16S rRNA. May interact with the 5'-terminal helix region of 16S rRNA. The polypeptide is Ribosome-binding factor A (Clostridium botulinum (strain Okra / Type B1)).